The following is a 115-amino-acid chain: T cell receptor beta variable 12-5 (115 aa).

The first 21 residues, 1 to 21 (MATRLLCCVVLCLLGEELIDA), serve as a signal peptide directing secretion. Residues 22–115 (RVTQTPRHKV…SAVYFCASGL (94 aa)) enclose the Ig-like domain. A disulfide bond links C42 and C111.

Alpha-beta TR is a heterodimer composed of an alpha and beta chain; disulfide-linked. The alpha-beta TR is associated with the transmembrane signaling CD3 coreceptor proteins to form the TR-CD3 (TcR or TCR). The assembly of alpha-beta TR heterodimers with CD3 occurs in the endoplasmic reticulum where a single alpha-beta TR heterodimer associates with one CD3D-CD3E heterodimer, one CD3G-CD3E heterodimer and one CD247 homodimer forming a stable octameric structure. CD3D-CD3E and CD3G-CD3E heterodimers preferentially associate with TR alpha and TR beta chains, respectively. The association of the CD247 homodimer is the last step of TcR assembly in the endoplasmic reticulum and is required for transport to the cell surface.

The protein localises to the cell membrane. Its function is as follows. V region of the variable domain of T cell receptor (TR) beta chain that participates in the antigen recognition. Alpha-beta T cell receptors are antigen specific receptors which are essential to the immune response and are present on the cell surface of T lymphocytes. Recognize peptide-major histocompatibility (MH) (pMH) complexes that are displayed by antigen presenting cells (APC), a prerequisite for efficient T cell adaptive immunity against pathogens. Binding of alpha-beta TR to pMH complex initiates TR-CD3 clustering on the cell surface and intracellular activation of LCK that phosphorylates the ITAM motifs of CD3G, CD3D, CD3E and CD247 enabling the recruitment of ZAP70. In turn ZAP70 phosphorylates LAT, which recruits numerous signaling molecules to form the LAT signalosome. The LAT signalosome propagates signal branching to three major signaling pathways, the calcium, the mitogen-activated protein kinase (MAPK) kinase and the nuclear factor NF-kappa-B (NF-kB) pathways, leading to the mobilization of transcription factors that are critical for gene expression and essential for T cell growth and differentiation. The T cell repertoire is generated in the thymus, by V-(D)-J rearrangement. This repertoire is then shaped by intrathymic selection events to generate a peripheral T cell pool of self-MH restricted, non-autoaggressive T cells. Post-thymic interaction of alpha-beta TR with the pMH complexes shapes TR structural and functional avidity. The protein is T cell receptor beta variable 12-5 of Homo sapiens (Human).